Consider the following 383-residue polypeptide: D-aspartate oxidase 3 (383 aa).

The first 17 residues, 1–17 (MLYALLLLFGGVSTVSS), serve as a signal peptide directing secretion. 2 residues coordinate FAD: Lys-56 and Ser-63. N-linked (GlcNAc...) asparagine glycosylation is found at Asn-152, Asn-271, and Asn-320. Thr-339 serves as a coordination point for FAD. N-linked (GlcNAc...) asparagine glycosylation is present at Asn-371.

It belongs to the DAMOX/DASOX family. FAD is required as a cofactor. In both sexes, present in coelomocytes (at protein level). Expressed in hypodermal cells and the proximal gonadal sheath cells in adult hermaphrodites (at protein level). Also expressed in probable head mesodermal cells and unidentified cells in the head, and vulval muscles in adult hermaphrodites. Expressed in the seminal vesicle, spicule and tail cells in adult males (at protein level).

The protein localises to the secreted. It catalyses the reaction D-aspartate + O2 + H2O = oxaloacetate + H2O2 + NH4(+). The enzyme catalyses D-glutamate + O2 + H2O = H2O2 + 2-oxoglutarate + NH4(+). Its function is as follows. Selectively catalyzes the oxidative deamination of acidic amino acids. Plays a role in the egg-laying events and maturation processes of the reproductive organs. This Caenorhabditis elegans protein is D-aspartate oxidase 3 (ddo-3).